The following is a 577-amino-acid chain: Steryl-sulfatase (577 aa).

The first 19 residues, 1-19 (MLWPCLLALLLSQLNFLCA), serve as a signal peptide directing secretion. Over 21–183 (RPGPGPNFLL…GTVFGSAQQV (163 aa)) the chain is Lumenal. 2 residues coordinate Ca(2+): Asp34 and Asp35. Asn46 is a glycosylation site (N-linked (GlcNAc...) asparagine). Cys74 is a binding site for Ca(2+). The active-site Nucleophile is the Cys74. At Cys74 the chain carries 3-oxoalanine (Cys). Residue His135 is part of the active site. 2 disulfide bridges follow: Cys140–Cys147 and Cys169–Cys241. The helical transmembrane segment at 184–207 (FVVLPMNILGAVLLAMALARWAGL) threads the bilayer. At 208 to 211 (ARPP) the chain is on the cytoplasmic side. Residues 212–233 (GWVFGVTVAAMAAVGGAYVAFL) traverse the membrane as a helical segment. At 234-577 (YHFRPANCFL…PLACRCAGDG (344 aa)) the chain is on the lumenal side. N-linked (GlcNAc...) asparagine glycosylation is present at Asn332. Positions 341 and 342 each coordinate Ca(2+). Cystine bridges form between Cys445/Cys488, Cys480/Cys486, and Cys561/Cys571. An N-linked (GlcNAc...) asparagine glycan is attached at Asn458.

The protein belongs to the sulfatase family. In terms of assembly, homodimer. The cofactor is Ca(2+). Post-translationally, the conversion to 3-oxoalanine (also known as C-formylglycine, FGly), of a serine or cysteine residue in prokaryotes and of a cysteine residue in eukaryotes, is critical for catalytic activity.

Its subcellular location is the microsome membrane. It localises to the endoplasmic reticulum membrane. It catalyses the reaction dehydroepiandrosterone 3-sulfate + H2O = 3beta-hydroxyandrost-5-en-17-one + sulfate + H(+). The enzyme catalyses estrone 3-sulfate + H2O = estrone + sulfate + H(+). In terms of biological role, catalyzes the conversion of sulfated steroid precursors, such as dehydroepiandrosterone sulfate (DHEA-S) and estrone sulfate to the free steroid. This Rattus norvegicus (Rat) protein is Steryl-sulfatase (Sts).